The chain runs to 474 residues: Na(+)/H(+) antiporter NhaA 3 (474 aa).

Helical transmembrane passes span 31–51, 73–93, 110–130, 141–161, 171–191, 194–214, 220–240, 280–300, 309–329, 347–367, and 378–398; these read VGGV…NIPA, LSVA…VAGI, AALP…VYTV, GWAV…AVIG, FLLT…AVFF, TLNF…WLLL, GWYV…NSGV, LAVP…GALA, LGVV…GTWL, VFAV…IGEL, and EVKA…TVLL.

Belongs to the NhaA Na(+)/H(+) (TC 2.A.33) antiporter family.

Its subcellular location is the cell membrane. The catalysed reaction is Na(+)(in) + 2 H(+)(out) = Na(+)(out) + 2 H(+)(in). Its function is as follows. Na(+)/H(+) antiporter that extrudes sodium in exchange for external protons. The polypeptide is Na(+)/H(+) antiporter NhaA 3 (Streptomyces coelicolor (strain ATCC BAA-471 / A3(2) / M145)).